Consider the following 170-residue polypeptide: Transcriptional repressor NrdR (170 aa).

The segment at 3 to 34 (CPFCGTQDTKVVDSRLVSEGAQVRRRRTCIHC) is a zinc-finger region. The ATP-cone domain maps to 49 to 139 (PKLIKSDGSR…VYRSFKDISE (91 aa)). A disordered region spans residues 151–170 (SVSIPKSKKTAPESKKEDQA). Positions 160-170 (TAPESKKEDQA) are enriched in basic and acidic residues.

This sequence belongs to the NrdR family. Zn(2+) is required as a cofactor.

In terms of biological role, negatively regulates transcription of bacterial ribonucleotide reductase nrd genes and operons by binding to NrdR-boxes. The sequence is that of Transcriptional repressor NrdR from Marinomonas sp. (strain MWYL1).